Consider the following 505-residue polypeptide: 2,3-bisphosphoglycerate-independent phosphoglycerate mutase (505 aa).

Mn(2+) contacts are provided by Asp-13 and Ser-63. Catalysis depends on Ser-63, which acts as the Phosphoserine intermediate. Substrate-binding positions include His-124, Arg-153 to Asp-154, Arg-183, Arg-189, Arg-254 to Arg-257, and Lys-330. Mn(2+) is bound by residues Asp-396, His-400, Asp-437, His-438, and His-456.

It belongs to the BPG-independent phosphoglycerate mutase family. In terms of assembly, monomer. It depends on Mn(2+) as a cofactor.

The enzyme catalyses (2R)-2-phosphoglycerate = (2R)-3-phosphoglycerate. It participates in carbohydrate degradation; glycolysis; pyruvate from D-glyceraldehyde 3-phosphate: step 3/5. In terms of biological role, catalyzes the interconversion of 2-phosphoglycerate and 3-phosphoglycerate. This chain is 2,3-bisphosphoglycerate-independent phosphoglycerate mutase, found in Dinoroseobacter shibae (strain DSM 16493 / NCIMB 14021 / DFL 12).